The sequence spans 473 residues: H(+)/Cl(-) exchange transporter ClcA (473 aa).

The Cytoplasmic portion of the chain corresponds to 1-32 (MKTDTSTFLAQQIVRLRRRDQIRRLMQRDKTP). The chain crosses the membrane as a helical span at residues 33 to 69 (LAILFMAAVVGTLTGLVGVAFEKTVSWVQNMRIGALV). The Periplasmic segment spans residues 70–76 (QVADHAF). The chain crosses the membrane as a helical span at residues 77-100 (LLWPLAFILSALLAMVGYFLVRKF). The short motif at 106–110 (GSGIP) is the Selectivity filter part_1 element. Ser107 serves as a coordination point for chloride. Positions 109-116 (IPEIEGAL) form an intramembrane region, helical. The Cytoplasmic segment spans residues 117–123 (EELRPVR). Transmembrane regions (helical) follow at residues 124–141 (WWRVLPVKFIGGMGTLGA) and 148–166 (EGPTVQIGGNLGRMVLDVF). Residues 146 to 150 (GREGP) carry the Selectivity filter part_2 motif. At 167 to 176 (RMRSAEARHT) the chain is on the cytoplasmic side. Intramembrane regions (helical) lie at residues 177 to 189 (LLATGAAAGLSAA) and 193 to 201 (PLAGILFII). The Cytoplasmic segment spans residues 202 to 214 (EEMRPQFRYNLIS). Residues 215–232 (IKAVFTGVIMSSIVFRIF) traverse the membrane as a helical segment. Topologically, residues 233–252 (NGEAPIIEVGKLSDAPVNTL) are periplasmic. A helical membrane pass occupies residues 253-281 (WLYLILGIIFGCVGPVFNSLVLRTQDMFQ). The Cytoplasmic portion of the chain corresponds to 282–287 (RFHGGE). Residues 288–309 (IKKWVLMGGAIGGLCGILGLIE) traverse the membrane as a helical segment. Residues 310-329 (PAAAGGGFNLIPIAAAGNFS) lie on the Periplasmic side of the membrane. A run of 2 helical transmembrane segments spans residues 330–349 (VGLLLFIFITRVVTTLLCFS) and 355–376 (GIFAPMLALGTLLGTAFGMAAA). The Selectivity filter part_3 motif lies at 355-359 (GIFAP). Chloride contacts are provided by Ile356 and Phe357. Topologically, residues 377–386 (VLFPQYHLEA) are periplasmic. Residues 387-401 (GTFAIAGMGALMAAS) constitute an intramembrane region (helical). Residues 402 to 404 (VRA) constitute an intramembrane region (note=Loop between two helices). The helical intramembrane region spans 405 to 416 (PLTGIVLVLEMT). The segment at residues 417 to 421 (DNYQL) is an intramembrane region (note=Loop between two helices). Residues 422-438 (ILPMIITCLGATLLAQF) traverse the membrane as a helical segment. Residues 439–473 (LGGKPLYSTILARTLAKQDAEQAAKNQNAPAGENT) lie on the Cytoplasmic side of the membrane. Tyr445 serves as a coordination point for chloride.

This sequence belongs to the chloride channel (TC 2.A.49) family. ClcA subfamily. In terms of assembly, homodimer.

It localises to the cell inner membrane. It catalyses the reaction 2 chloride(in) + H(+)(out) = 2 chloride(out) + H(+)(in). In terms of biological role, proton-coupled chloride transporter. Functions as antiport system and exchanges two chloride ions for 1 proton. Probably acts as an electrical shunt for an outwardly-directed proton pump that is linked to amino acid decarboxylation, as part of the extreme acid resistance (XAR) response. The sequence is that of H(+)/Cl(-) exchange transporter ClcA from Salmonella typhi.